Here is a 146-residue protein sequence, read N- to C-terminus: Hemoglobin subunit beta (146 aa).

Valine 1 is modified (N-acetylvaline). The 145-residue stretch at 2–146 (HLTADEKAAV…VANALAHKYH (145 aa)) folds into the Globin domain. The residue at position 12 (threonine 12) is a Phosphothreonine. Serine 44 carries the post-translational modification Phosphoserine. An N6-acetyllysine modification is found at lysine 59. A heme b-binding site is contributed by histidine 63. Lysine 82 carries the N6-acetyllysine modification. Histidine 92 contacts heme b. Residue cysteine 93 is modified to S-nitrosocysteine. Lysine 144 is modified (N6-acetyllysine).

It belongs to the globin family. Heterotetramer of two alpha chains and two beta chains. Red blood cells.

Its function is as follows. Involved in oxygen transport from the lung to the various peripheral tissues. This Odobenus rosmarus divergens (Pacific walrus) protein is Hemoglobin subunit beta (HBB).